Here is a 2535-residue protein sequence, read N- to C-terminus: Piezo-type mechanosensitive ion channel component 1 (2535 aa).

Helical transmembrane passes span 13–25 (LLLP…ASLL), 29–44 (ALSL…LPWL), and 59–81 (LLRA…QICL). The N-linked (GlcNAc...) asparagine glycan is linked to Asn-100. Helical transmembrane passes span 122–138 (VAPD…CLGL), 193–212 (LLVT…AGIA), 215–234 (SAFS…WWSC), 246–266 (LCVM…CYQT), and 308–328 (WPIY…TSLL). Residues 346–357 (DEEHELELDQLE) show a composition bias toward acidic residues. Positions 346–377 (DEEHELELDQLEPEPQARGTTQGATPTTTGPD) are disordered. Over residues 358 to 376 (PEPQARGTTQGATPTTTGP) the composition is skewed to low complexity. Asn-380 carries an N-linked (GlcNAc...) asparagine glycan. 8 consecutive transmembrane segments (helical) span residues 416 to 436 (LILD…SIMY), 439 to 454 (WLTF…IWTV), 460 to 482 (LAML…RYVW), 510 to 527 (CLDL…WLLL), 572 to 592 (IYVK…SFAG), 594 to 614 (LVVY…LFQV), 625 to 646 (VFWW…TFQF), and 677 to 693 (LFSS…ACIL). Ser-749 is subject to Phosphoserine. Helical transmembrane passes span 803-814 (LVALYTVWVALK), 818-831 (VMNL…AFAL), 846-860 (VWTC…LYQL), 913-940 (GYIQ…HYRR), 981-996 (GLEI…IGQR), 999-1014 (FMVI…ILTR), 1028-1043 (CLFL…LLCL), 1083-1104 (TNLI…VFSA), 1140-1166 (YLDM…TGAT), 1172-1190 (GLGY…TTLL), 1204-1222 (LILY…SLLS), and 1272-1288 (IWDS…RRVF). A coiled-coil region spans residues 1325–1356 (HRQTEERSLAQLKRQMKRIRAKQEKYRQSQAS). Disordered stretches follow at residues 1345 to 1383 (AKQE…RTQW) and 1556 to 1597 (SGPV…NTRS). A compositionally biased stretch (polar residues) spans 1352–1365 (QSQASRGQLQSTDP). Ser-1372 and Ser-1377 each carry phosphoserine. The segment covering 1579-1597 (SSMTDDTGSPLSTGYNTRS) has biased composition (polar residues). A phosphoserine mark is found at Ser-1614, Ser-1618, and Ser-1633. A run of 4 helical transmembrane segments spans residues 1644–1687 (PELE…LNHM), 1692–1707 (AASL…WAML), 1716–1734 (FWMT…KYLF), and 1767–1788 (DSYI…SQLL). 2 stretches are compositionally biased toward basic and acidic residues: residues 1801–1811 (PKDHCRSSEKD) and 1842–1867 (PKDH…DLKP). The tract at residues 1801–1911 (PKDHCRSSEK…GREAAGRKRL (111 aa)) is disordered. Residues 1868–1881 (QHRRHISIRFRRRK) show a composition bias toward basic residues. Transmembrane regions (helical) follow at residues 1965–1984 (YALM…FGFW), 2005–2021 (PQAF…TMVI), 2036–2056 (AFQV…LPAV), 2065–2080 (AVAQ…YFAL), and 2181–2201 (GLII…MSLI). A disulfide bridge links Cys-2425 with Cys-2429. A helical transmembrane segment spans residues 2446–2466 (LGFLAGYGIVGLYVSIVLVVG).

Belongs to the PIEZO (TC 1.A.75) family. Homotrimer; the homotrimer forms a propeller-shaped Piezo channel with a cation-ion conducting pore. Heterotrimeric interaction may occur between PIEZO1 and PIEZO2. Interacts with PKD2. Interacts with STOM13. Interacts with TMC1, TMC2, PCDH15 and CIB2; the interaction may be part of the MET complex. Interacts with MDFIC (via C-terminus); the interaction prolongs Piezo channel inactivation. Interacts with MDFI (via C-terminus); the interaction prolongs Piezo channel inactivation. As to expression, moderate expression in lung and kidney. Very weak expression in heart, spleen and liver.

The protein resides in the endoplasmic reticulum membrane. It localises to the endoplasmic reticulum-Golgi intermediate compartment membrane. It is found in the cell membrane. Its subcellular location is the cell projection. The protein localises to the lamellipodium membrane. It carries out the reaction K(+)(in) = K(+)(out). The enzyme catalyses Na(+)(in) = Na(+)(out). It catalyses the reaction Ca(2+)(in) = Ca(2+)(out). The catalysed reaction is Mg(2+)(in) = Mg(2+)(out). Its activity is regulated as follows. Regulated by auxillary subunits MDFIC and MDFI. Down-regulated by phosphatidylserines exposed on the cell surface. Divalent ions decrease the single-channel permeability of K(+). Pore-forming subunit of the mechanosensitive non-specific cation Piezo channel required for rapidly adapting mechanically activated (MA) currents and has a key role in sensing touch and tactile pain. Piezo channels are homotrimeric three-blade propeller-shaped structures that utilize a cap-motion and plug-and-latch mechanism to gate their ion-conducting pathways. Generates currents characterized by a linear current-voltage relationship that are sensitive to ruthenium red and gadolinium. Conductance to monovalent alkali ions is highest for K(+), intermediate for Na(+) and lowest for Li(+). Divalent ions except for Mn(2+) permeate the channel but more slowly than the monovalent ions and they also reduce K(+) currents. Plays a key role in epithelial cell adhesion by maintaining integrin activation through R-Ras recruitment to the ER, most probably in its activated state, and subsequent stimulation of calpain signaling. In inner ear hair cells, PIEZO1/2 subunits may constitute part of the mechanotransducer (MET) non-selective cation channel complex where they may act as pore-forming ion-conducting component in the complex. In the kidney, may contribute to the detection of intraluminal pressure changes and to urine flow sensing. Acts as a shear-stress sensor that promotes endothelial cell organization and alignment in the direction of blood flow through calpain activation. Plays a key role in blood vessel formation and vascular structure in both development and adult physiology. Acts as a sensor of phosphatidylserine (PS) flipping at the plasma membrane and governs morphogenesis of muscle cells. In myoblasts, flippase-mediated PS enrichment at the inner leaflet of plasma membrane triggers channel activation and Ca(2+) influx followed by Rho GTPases signal transduction, leading to assembly of cortical actomyosin fibers and myotube formation. This chain is Piezo-type mechanosensitive ion channel component 1 (Piezo1), found in Rattus norvegicus (Rat).